A 501-amino-acid chain; its full sequence is Lysine--tRNA ligase (501 aa).

Mg(2+) contacts are provided by Glu402 and Glu409.

Belongs to the class-II aminoacyl-tRNA synthetase family. Homodimer. Requires Mg(2+) as cofactor.

It localises to the cytoplasm. It catalyses the reaction tRNA(Lys) + L-lysine + ATP = L-lysyl-tRNA(Lys) + AMP + diphosphate. This chain is Lysine--tRNA ligase, found in Helicobacter pylori (strain G27).